Here is a 307-residue protein sequence, read N- to C-terminus: Solute carrier family 25 member 53 (307 aa).

The segment at 1–23 (MGEQNHSPGKELQHRTRAEAPGK) is disordered. The span at 8–22 (PGKELQHRTRAEAPG) shows a compositional bias: basic and acidic residues. 3 Solcar repeats span residues 25 to 105 (SWHS…LLCF), 112 to 202 (HTLG…IQDG), and 210 to 302 (HWVP…HSRK). The next 6 membrane-spanning stretches (helical) occupy residues 31-51 (YALG…IYKV), 82-102 (YPPL…YDSL), 112-132 (HTLG…AVAL), 181-201 (VLAR…PIQD), 215-235 (LVSG…LIVL), and 269-290 (IYRG…TTAI).

Belongs to the mitochondrial carrier (TC 2.A.29) family.

The protein localises to the mitochondrion inner membrane. This chain is Solute carrier family 25 member 53 (SLC25A53), found in Homo sapiens (Human).